A 446-amino-acid polypeptide reads, in one-letter code: Minor fimbrium tip subunit Mfa3 (446 aa).

The N-terminal stretch at 1–20 (MMQLKKRYFALILLLFLWSG) is a signal peptide. A lipid anchor (N-palmitoyl cysteine) is attached at Cys-21. Cys-21 is lipidated: S-diacylglycerol cysteine. The propeptide occupies 21–43 (CDRGVDPQPDPLQPDVYLLVNAR).

This sequence belongs to the bacteroidetes fimbrillin superfamily. FimB/Mfa2 family. Component of the fimbrium tip. Minor fimbriae are composed of a structural subunit, most often Mfa1, and the accessory subunits Mfa3, Mfa4 and Mfa5. Fimbrium assembly occurs by linear, head-to-tail oligomerization of fimbrial subunits. This is mediated via insertion of a C-terminal beta-strand from one subunit into a groove in the N-terminal domain of the following subunit. Mfa3 is required for Mfa4 and Mfa5 insertion into the fimbrium.

It is found in the fimbrium. The protein resides in the cell outer membrane. Tip subunit of the minor fimbriae. These filamentous pili are attached to the cell surface; they mediate biofilm formation, adhesion onto host cells and onto other bacteria that are part of the oral microbiome. They play an important role in invasion of periodontal tissues and are recognized as major virulence factors. Fimbrium subunits from different strains have highly divergent sequences, and this correlates with pathogenicity. This is Minor fimbrium tip subunit Mfa3 (mfa3) from Porphyromonas gingivalis (strain ATCC 33277 / DSM 20709 / CIP 103683 / JCM 12257 / NCTC 11834 / 2561).